The chain runs to 469 residues: D-3-phosphoglycerate dehydrogenase 2 (469 aa).

Ser2 carries the post-translational modification N-acetylserine. Phosphoserine is present on residues Ser22, Ser29, and Ser33. NAD(+) is bound by residues 208 to 209 (HI), Asp228, 285 to 287 (ASR), and Asp311. The active site involves Arg287. Residue Glu316 is part of the active site. The Proton donor role is filled by His347. Position 347-350 (347-350 (HIGG)) interacts with NAD(+). Positions 399-469 (RVLYIHRNVP…SAKVSIRLLY (71 aa)) constitute an ACT domain.

Belongs to the D-isomer specific 2-hydroxyacid dehydrogenase family.

The catalysed reaction is (2R)-3-phosphoglycerate + NAD(+) = 3-phosphooxypyruvate + NADH + H(+). The enzyme catalyses (R)-2-hydroxyglutarate + NAD(+) = 2-oxoglutarate + NADH + H(+). The protein operates within amino-acid biosynthesis; L-serine biosynthesis; L-serine from 3-phospho-D-glycerate: step 1/3. Catalyzes the reversible oxidation of 3-phospho-D-glycerate to 3-phosphonooxypyruvate, the first step of the phosphorylated L-serine biosynthesis pathway. Also catalyzes the reversible oxidation of 2-hydroxyglutarate to 2-oxoglutarate. This is D-3-phosphoglycerate dehydrogenase 2 (SER33) from Saccharomyces cerevisiae (strain ATCC 204508 / S288c) (Baker's yeast).